Consider the following 338-residue polypeptide: Lipoate-protein ligase A (338 aa).

Residues Pro29–Val216 form the BPL/LPL catalytic domain. ATP-binding positions include Arg71, Gly76–Phe79, and Lys134. Residue Lys134 coordinates (R)-lipoate.

This sequence belongs to the LplA family. Monomer.

The protein resides in the cytoplasm. The catalysed reaction is L-lysyl-[lipoyl-carrier protein] + (R)-lipoate + ATP = N(6)-[(R)-lipoyl]-L-lysyl-[lipoyl-carrier protein] + AMP + diphosphate + H(+). The protein operates within protein modification; protein lipoylation via exogenous pathway; protein N(6)-(lipoyl)lysine from lipoate: step 1/2. It participates in protein modification; protein lipoylation via exogenous pathway; protein N(6)-(lipoyl)lysine from lipoate: step 2/2. Its function is as follows. Catalyzes both the ATP-dependent activation of exogenously supplied lipoate to lipoyl-AMP and the transfer of the activated lipoyl onto the lipoyl domains of lipoate-dependent enzymes. This Salmonella paratyphi C (strain RKS4594) protein is Lipoate-protein ligase A.